Here is a 341-residue protein sequence, read N- to C-terminus: ATPase GET3 (341 aa).

34–41 is an ATP binding site; it reads KGGVGKTT. D63 is an active-site residue. E245 and N272 together coordinate ATP. C283 and C286 together coordinate Zn(2+).

This sequence belongs to the arsA ATPase family. In terms of assembly, homodimer.

It is found in the cytoplasm. The protein resides in the endoplasmic reticulum. Its function is as follows. ATPase required for the post-translational delivery of tail-anchored (TA) proteins to the endoplasmic reticulum. Recognizes and selectively binds the transmembrane domain of TA proteins in the cytosol. This complex then targets to the endoplasmic reticulum by membrane-bound receptors, where the tail-anchored protein is released for insertion. This process is regulated by ATP binding and hydrolysis. ATP binding drives the homodimer towards the closed dimer state, facilitating recognition of newly synthesized TA membrane proteins. ATP hydrolysis is required for insertion. Subsequently, the homodimer reverts towards the open dimer state, lowering its affinity for the membrane-bound receptor, and returning it to the cytosol to initiate a new round of targeting. This Ajellomyces capsulatus (strain G186AR / H82 / ATCC MYA-2454 / RMSCC 2432) (Darling's disease fungus) protein is ATPase GET3.